The primary structure comprises 656 residues: Pyoverdine export ATP-binding/permease protein PvdT (656 aa).

The region spanning 6–245 (IDLRGIRKSY…SANPAALQAV (240 aa)) is the ABC transporter domain. Position 43-50 (43-50 (GASGSGKS)) interacts with ATP. 4 helical membrane-spanning segments follow: residues 284–304 (ALTL…LAVG), 538–558 (IAAI…LMTV), 589–609 (LSVV…AALL), and 619–639 (LSAV…FGFM).

The protein belongs to the ABC transporter superfamily. Macrolide exporter (TC 3.A.1.122) family. As to quaternary structure, part of the tripartite efflux system PvdRT-OpmQ, which is composed of an inner membrane component with both ATPase and permease domains, PvdT, a periplasmic membrane fusion protein, PvdR, and an outer membrane component, OpmQ.

Its subcellular location is the cell inner membrane. Its function is as follows. Part of the tripartite efflux system PvdRT-OpmQ required for the secretion into the extracellular milieu of the siderophore pyoverdine (PVD), which is involved in iron acquisition. This subunit binds PVD and drives its secretion by hydrolyzing ATP. The system is responsible for export of newly synthesized PVD after the final steps of biosynthesis have taken place in the periplasm. It is also responsible for recycling of PVD after internalization of ferri-PVD into the periplasm by the outer-membrane receptor FpvA and release of iron from PVD, thus making PVD available for new cycles of iron uptake. This Pseudomonas syringae pv. tomato (strain ATCC BAA-871 / DC3000) protein is Pyoverdine export ATP-binding/permease protein PvdT.